The sequence spans 371 residues: Forkhead box protein E1 (371 aa).

The interval 21–53 (EERGEAAAAGAGVPAEAAGRGAGGRRRKRPLQR) is disordered. Residues 26 to 39 (AAAAGAGVPAEAAG) are compositionally biased toward low complexity. The segment covering 43–52 (GGRRRKRPLQ) has biased composition (basic residues). A DNA-binding region (fork-head) is located at residues 55-149 (KPPYSYIALI…ESGSFLRRRK (95 aa)).

Phosphorylated. In terms of tissue distribution, expressed in Rathke pouch, in thyroid, and in the epithelium of the pharyngeal wall and arches, whereas it is absent in the epithelium of the pharyngeal pouches.

Its subcellular location is the nucleus. In terms of biological role, transcription factor that binds consensus sites on a variety of gene promoters and activate their transcription. Involved in proper palate formation, most probably through the expression of MSX1 and TGFB3 genes which are direct targets of this transcription factor. Also implicated in thyroid gland morphogenesis. May indirectly play a role in cell growth and migration through the regulation of WNT5A expression. This Mus musculus (Mouse) protein is Forkhead box protein E1 (Foxe1).